A 147-amino-acid chain; its full sequence is Hemoglobin subunit beta (147 aa).

Valine 2 bears the N-acetylvaline mark. The Globin domain maps to 3-147; sequence HLTGEEKSAV…VANALAHKYH (145 aa). Phosphothreonine is present on threonine 13. Serine 45 is subject to Phosphoserine. Residue lysine 60 is modified to N6-acetyllysine. Heme b is bound at residue histidine 64. Lysine 83 carries the N6-acetyllysine modification. Histidine 93 is a heme b binding site. Position 94 is an S-nitrosocysteine (cysteine 94). Lysine 145 is subject to N6-acetyllysine.

It belongs to the globin family. As to quaternary structure, heterotetramer of two alpha chains and two beta chains. Red blood cells.

Involved in oxygen transport from the lung to the various peripheral tissues. This chain is Hemoglobin subunit beta (HBB), found in Callimico goeldii (Goeldi's marmoset).